The following is a 170-amino-acid chain: tRNA-splicing endonuclease (170 aa).

Active-site residues include Tyr110, His116, and Lys147.

The protein belongs to the tRNA-intron endonuclease family. Archaeal short subfamily. In terms of assembly, homotetramer; although the tetramer contains four active sites, only two participate in the cleavage. Therefore, it should be considered as a dimer of dimers.

The catalysed reaction is pretRNA = a 3'-half-tRNA molecule with a 5'-OH end + a 5'-half-tRNA molecule with a 2',3'-cyclic phosphate end + an intron with a 2',3'-cyclic phosphate and a 5'-hydroxyl terminus.. In terms of biological role, endonuclease that removes tRNA introns. Cleaves pre-tRNA at the 5'- and 3'-splice sites to release the intron. The products are an intron and two tRNA half-molecules bearing 2',3' cyclic phosphate and 5'-OH termini. Recognizes a pseudosymmetric substrate in which 2 bulged loops of 3 bases are separated by a stem of 4 bp. This is tRNA-splicing endonuclease from Pyrococcus horikoshii (strain ATCC 700860 / DSM 12428 / JCM 9974 / NBRC 100139 / OT-3).